The sequence spans 215 residues: MRTCPDCAAWCAYVDGEGSQLQRREMCAHLQGCTHCATCVAHYRAMRSLVKHADRVSSRDFTMAFPYLRVRHRVASCMPRPWWQARSSPLSAAGPVRAAALAVAVASLCVCTLLLTHIVERRPVSRAGEASFTPIVPMRVRAPVGYARGVKVFGPAVSANSNVLRKPAAVFTVCAFAQLYGSDPAYEMETVPVRLSVIPVPSYVLNASKAQFFSP.

The chain crosses the membrane as a helical span at residues 98 to 119 (AAALAVAVASLCVCTLLLTHIV).

The protein resides in the membrane. This is an uncharacterized protein from Treponema pallidum (strain Nichols).